We begin with the raw amino-acid sequence, 414 residues long: Putative competence-damage inducible protein (414 aa).

Belongs to the CinA family.

In Geobacillus kaustophilus (strain HTA426), this protein is Putative competence-damage inducible protein.